We begin with the raw amino-acid sequence, 469 residues long: Uronate isomerase (469 aa).

This sequence belongs to the metallo-dependent hydrolases superfamily. Uronate isomerase family.

It carries out the reaction D-glucuronate = D-fructuronate. The enzyme catalyses aldehydo-D-galacturonate = keto-D-tagaturonate. Its pathway is carbohydrate metabolism; pentose and glucuronate interconversion. This Yersinia pseudotuberculosis serotype O:1b (strain IP 31758) protein is Uronate isomerase.